Consider the following 130-residue polypeptide: Glycine cleavage system H protein (130 aa).

One can recognise a Lipoyl-binding domain in the interval 24-106; that stretch reads GIKVGISAFA…YQEGWLLKIT (83 aa). Residue Lys65 is modified to N6-lipoyllysine.

This sequence belongs to the GcvH family. In terms of assembly, the glycine cleavage system is composed of four proteins: P, T, L and H. Requires (R)-lipoate as cofactor.

Functionally, the glycine cleavage system catalyzes the degradation of glycine. The H protein shuttles the methylamine group of glycine from the P protein to the T protein. This Synechococcus sp. (strain RCC307) protein is Glycine cleavage system H protein.